Reading from the N-terminus, the 262-residue chain is Eukaryotic translation initiation factor 3 subunit G (262 aa).

The 79-residue stretch at 182 to 260 (NTCRVTNLPQ…MVLKVEWTRP (79 aa)) folds into the RRM domain.

The protein belongs to the eIF-3 subunit G family. As to quaternary structure, component of the eukaryotic translation initiation factor 3 (eIF-3) complex.

Its subcellular location is the cytoplasm. In terms of biological role, RNA-binding component of the eukaryotic translation initiation factor 3 (eIF-3) complex, which is involved in protein synthesis of a specialized repertoire of mRNAs and, together with other initiation factors, stimulates binding of mRNA and methionyl-tRNAi to the 40S ribosome. The eIF-3 complex specifically targets and initiates translation of a subset of mRNAs involved in cell proliferation. This subunit can bind 18S rRNA. Binds to GC-rich 5'UTRs in cholinergic motor neurons, thereby may play a role in translational regulation of mRNAs involved in neuropeptide signaling and stress response, including hlh-30 isoform d and ncs-2. In Caenorhabditis elegans, this protein is Eukaryotic translation initiation factor 3 subunit G.